The sequence spans 602 residues: Aspartate--tRNA(Asp/Asn) ligase (602 aa).

Residue glutamate 176 participates in L-aspartate binding. An aspartate region spans residues 200-203 (QQFK). Arginine 222 and histidine 452 together coordinate L-aspartate. 222–224 (RDE) contributes to the ATP binding site. Residue glutamate 490 coordinates ATP. Arginine 497 is a binding site for L-aspartate. 542-545 (GIDR) serves as a coordination point for ATP.

It belongs to the class-II aminoacyl-tRNA synthetase family. Type 1 subfamily. Homodimer.

It localises to the cytoplasm. The catalysed reaction is tRNA(Asx) + L-aspartate + ATP = L-aspartyl-tRNA(Asx) + AMP + diphosphate. In terms of biological role, aspartyl-tRNA synthetase with relaxed tRNA specificity since it is able to aspartylate not only its cognate tRNA(Asp) but also tRNA(Asn). Reaction proceeds in two steps: L-aspartate is first activated by ATP to form Asp-AMP and then transferred to the acceptor end of tRNA(Asp/Asn). This chain is Aspartate--tRNA(Asp/Asn) ligase, found in Rickettsia bellii (strain OSU 85-389).